The primary structure comprises 144 residues: Bacilliredoxin BT9727_3899 (144 aa).

This sequence belongs to the bacilliredoxin family.

The protein is Bacilliredoxin BT9727_3899 of Bacillus thuringiensis subsp. konkukian (strain 97-27).